A 187-amino-acid polypeptide reads, in one-letter code: Superoxide dismutase [Cu-Zn] (187 aa).

Residues 1 to 23 form the signal peptide; sequence MMKMKTLLALAISGICAAGVANA. Cu cation contacts are provided by H80, H82, and H105. An intrachain disulfide couples C87 to C183. The Zn(2+) site is built by H105, H114, H123, and D126. H161 is a binding site for Cu cation.

This sequence belongs to the Cu-Zn superoxide dismutase family. Homodimer. Cu cation serves as cofactor. It depends on Zn(2+) as a cofactor.

The protein resides in the periplasm. It carries out the reaction 2 superoxide + 2 H(+) = H2O2 + O2. Functionally, destroys radicals which are normally produced within the cells and which are toxic to biological systems. Its function is as follows. May confer survival advantage by accelerating dismutation of superoxide of environmental origin to hydrogen peroxide, disruptive to the normal mucociliary clearance process in the host. This chain is Superoxide dismutase [Cu-Zn] (sodC), found in Haemophilus parainfluenzae.